The primary structure comprises 353 residues: Protein pelota homolog (353 aa).

This sequence belongs to the eukaryotic release factor 1 family. Pelota subfamily. As to quaternary structure, monomer. It depends on a divalent metal cation as a cofactor.

The protein resides in the cytoplasm. May function in recognizing stalled ribosomes, interact with stem-loop structures in stalled mRNA molecules, and effect endonucleolytic cleavage of the mRNA. May play a role in the release non-functional ribosomes and degradation of damaged mRNAs. Has endoribonuclease activity. This Methanopyrus kandleri (strain AV19 / DSM 6324 / JCM 9639 / NBRC 100938) protein is Protein pelota homolog.